Consider the following 466-residue polypeptide: Cysteine--tRNA ligase (466 aa).

C28 provides a ligand contact to Zn(2+). The short motif at 30–40 (PTVYNYIHIGN) is the 'HIGH' region element. Positions 208, 233, and 237 each coordinate Zn(2+). Residues 265–269 (KMSKS) carry the 'KMSKS' region motif. K268 is an ATP binding site.

It belongs to the class-I aminoacyl-tRNA synthetase family. In terms of assembly, monomer. It depends on Zn(2+) as a cofactor.

Its subcellular location is the cytoplasm. It carries out the reaction tRNA(Cys) + L-cysteine + ATP = L-cysteinyl-tRNA(Cys) + AMP + diphosphate. The chain is Cysteine--tRNA ligase from Staphylococcus haemolyticus (strain JCSC1435).